The sequence spans 334 residues: Beta-1,3-N-acetylglucosaminyltransferase radical fringe (334 aa).

The Cytoplasmic segment spans residues 1 to 6; the sequence is MSRVRR. Residues 7–29 traverse the membrane as a helical; Signal-anchor for type II membrane protein segment; the sequence is VLCRACLALAAVLAVLLLLPLPL. At 30 to 334 the chain is on the lumenal side; the sequence is PLPLPLPRAP…MKNRGKEAFQ (305 aa). Arginine 77 provides a ligand contact to substrate. The N-linked (GlcNAc...) asparagine glycan is linked to asparagine 116. 2 disulfide bridges follow: cysteine 117/cysteine 128 and cysteine 146/cysteine 210. Aspartate 150 is a binding site for substrate. Aspartate 151 lines the Mn(2+) pocket. Aspartate 240 is a catalytic residue. Histidine 264 provides a ligand contact to Mn(2+). Cysteine 314 and cysteine 323 are joined by a disulfide.

This sequence belongs to the glycosyltransferase 31 family. The cofactor is Mn(2+). Most abundantly expressed in adult brain. Expressed in most neurons of the brain but not in glial cells. Also detected to a lower extent in adult lung and kidney.

Its subcellular location is the golgi apparatus membrane. It carries out the reaction 3-O-(alpha-L-fucosyl)-L-threonyl-[EGF-like domain protein] + UDP-N-acetyl-alpha-D-glucosamine = 3-O-(N-acetyl-beta-D-glucosaminyl-(1-&gt;3)-alpha-L-fucosyl)-L-threonyl-[EGF-like domain protein] + UDP + H(+). The catalysed reaction is 3-O-(alpha-L-fucosyl)-L-seryl-[EGF-like domain protein] + UDP-N-acetyl-alpha-D-glucosamine = 3-O-(N-acetyl-beta-D-glucosaminyl-(1-&gt;3)-alpha-L-fucosyl)-L-seryl-[EGF-like domain protein] + UDP + H(+). In terms of biological role, glycosyltransferase that initiates the elongation of O-linked fucose residues attached to EGF-like repeats in the extracellular domain of Notch molecules. Modulates NOTCH1 activity by modifying O-fucose residues at specific EGF-like domains resulting in enhancement of NOTCH1 activation by DLL1 and JAG1. Inhibits Notch signaling in postmitotic neurons of the brain. It may play a role in adult brain and in neurogenesis. It may play a role in limb development. The polypeptide is Beta-1,3-N-acetylglucosaminyltransferase radical fringe (Rattus norvegicus (Rat)).